The following is an 85-amino-acid chain: Transcription factor 4 (85 aa).

The bHLH domain occupies 7-60; that stretch reads ERRMANNARERLRVRDINEAFKELGRMVQLHLKSDKPQTKLLILHQAVAVILSL. Residues 62–85 are class A specific domain; sequence QQVRERNLNPKAACLKRREEEKVS.

In terms of assembly, efficient DNA binding requires dimerization with another bHLH protein. Forms homo- or heterooligomers with myogenin.

Its subcellular location is the nucleus. In terms of biological role, transcription factor that binds to the immunoglobulin enhancer Mu-E5/KE5-motif. Involved in the initiation of neuronal differentiation. Binds to the E-box present in the somatostatin receptor 2 initiator element (SSTR2-INR) to activate transcription. This chain is Transcription factor 4 (TCF4), found in Gallus gallus (Chicken).